Here is a 292-residue protein sequence, read N- to C-terminus: 2-(5''-triphosphoribosyl)-3'-dephosphocoenzyme-A synthase (292 aa).

Belongs to the CitG/MdcB family.

It carries out the reaction 3'-dephospho-CoA + ATP = 2'-(5''-triphospho-alpha-D-ribosyl)-3'-dephospho-CoA + adenine. Functionally, catalyzes the formation of 2-(5''-triphosphoribosyl)-3'-dephosphocoenzyme-A, the precursor of the prosthetic group of the holo-acyl carrier protein (gamma chain) of citrate lyase, from ATP and dephospho-CoA. The sequence is that of 2-(5''-triphosphoribosyl)-3'-dephosphocoenzyme-A synthase from Escherichia coli O17:K52:H18 (strain UMN026 / ExPEC).